Consider the following 330-residue polypeptide: Ketol-acid reductoisomerase (NADP(+)) (330 aa).

The KARI N-terminal Rossmann domain occupies 1-181 (MNVYYEQDAD…GGTKAGVIET (181 aa)). NADP(+) is bound by residues 24–27 (YGSQ), arginine 47, serine 50, serine 52, and 82–85 (DQNQ). Histidine 107 is a catalytic residue. Position 133 (glycine 133) interacts with NADP(+). The KARI C-terminal knotted domain occupies 182–327 (SIKNETETDL…AKLRDMMSWL (146 aa)). Residues aspartate 190, glutamate 194, glutamate 226, and glutamate 230 each coordinate Mg(2+). Serine 251 is a binding site for substrate.

The protein belongs to the ketol-acid reductoisomerase family. The cofactor is Mg(2+).

The enzyme catalyses (2R)-2,3-dihydroxy-3-methylbutanoate + NADP(+) = (2S)-2-acetolactate + NADPH + H(+). It catalyses the reaction (2R,3R)-2,3-dihydroxy-3-methylpentanoate + NADP(+) = (S)-2-ethyl-2-hydroxy-3-oxobutanoate + NADPH + H(+). It functions in the pathway amino-acid biosynthesis; L-isoleucine biosynthesis; L-isoleucine from 2-oxobutanoate: step 2/4. The protein operates within amino-acid biosynthesis; L-valine biosynthesis; L-valine from pyruvate: step 2/4. Functionally, involved in the biosynthesis of branched-chain amino acids (BCAA). Catalyzes an alkyl-migration followed by a ketol-acid reduction of (S)-2-acetolactate (S2AL) to yield (R)-2,3-dihydroxy-isovalerate. In the isomerase reaction, S2AL is rearranged via a Mg-dependent methyl migration to produce 3-hydroxy-3-methyl-2-ketobutyrate (HMKB). In the reductase reaction, this 2-ketoacid undergoes a metal-dependent reduction by NADPH to yield (R)-2,3-dihydroxy-isovalerate. In Pelodictyon phaeoclathratiforme (strain DSM 5477 / BU-1), this protein is Ketol-acid reductoisomerase (NADP(+)).